The sequence spans 606 residues: Kelch-like protein 41 (606 aa).

At S3 the chain carries Phosphoserine. Positions 33–100 constitute a BTB domain; that stretch reads IDCTLKAGDK…LYSASIDLND (68 aa). A BACK domain is found at 135-237; sequence CLAILRLGLL…TEKYFKDHVE (103 aa). Kelch repeat units lie at residues 346 to 398, 399 to 447, 448 to 495, 497 to 542, and 544 to 599; these read QIYV…EVDD, KIYV…SHKG, MIYC…VHKG, IVIA…SLAG, and LYAI…TRLN.

In terms of assembly, interacts with NRAP. Interacts with LASP1. Part of a complex that contains CUL3, RBX1 and KLHL41. In terms of processing, ubiquitinated by E3 ubiquitin ligase complex formed by CUL3 and RBX1 and probably targeted for proteasome-independent degradation. Quinone-induced oxidative stress increases its ubiquitination. Sarcomeric muscle.

The protein localises to the cytoplasm. The protein resides in the cytoskeleton. It is found in the cell projection. Its subcellular location is the pseudopodium. It localises to the ruffle. The protein localises to the myofibril. The protein resides in the sarcomere. It is found in the m line. Its subcellular location is the sarcoplasmic reticulum membrane. It localises to the endoplasmic reticulum membrane. In terms of biological role, involved in skeletal muscle development and differentiation. Regulates proliferation and differentiation of myoblasts and plays a role in myofibril assembly by promoting lateral fusion of adjacent thin fibrils into mature, wide myofibrils. Required for pseudopod elongation in transformed cells. This is Kelch-like protein 41 (KLHL41) from Homo sapiens (Human).